A 269-amino-acid polypeptide reads, in one-letter code: Peptide deformylase 1A, chloroplastic/mitochondrial (269 aa).

The transit peptide at 1 to 60 directs the protein to the chloroplast and mitochondrion; it reads MGLHRDEATAMETLFRVSLRLLPVSAAVTCRSIRFPVSRPGSSHLLNRKLYNLPTSSSSS. Residues 123-126 and Gly187 contribute to the substrate site; that span reads PGVG. Cys188 contacts Zn(2+). The segment at 191-196 is dimerization; the sequence is VDGFRA. His230 provides a ligand contact to Zn(2+). The active site involves Glu231. His234 serves as a coordination point for Zn(2+). The segment at 236–254 is dimerization; it reads DGNLYVDKMVPRTFRTVDN.

It belongs to the polypeptide deformylase family. As to quaternary structure, homodimer. Requires Zn(2+) as cofactor. As to expression, expressed in roots, leaves, flowers and siliques.

The protein resides in the plastid. The protein localises to the chloroplast stroma. It is found in the mitochondrion. The enzyme catalyses N-terminal N-formyl-L-methionyl-[peptide] + H2O = N-terminal L-methionyl-[peptide] + formate. Its activity is regulated as follows. Inhibited by actinonin. Functionally, removes the formyl group from the N-terminal Met of newly synthesized proteins. This is Peptide deformylase 1A, chloroplastic/mitochondrial (PDF1A) from Arabidopsis thaliana (Mouse-ear cress).